A 192-amino-acid polypeptide reads, in one-letter code: uncharacterized protein (192 aa).

The tract at residues 71–100 (NNVLPEPSKPNNPVVNPPVSPIQPKTDPEQ) is disordered. Residues 77–91 (PSKPNNPVVNPPVSP) show a composition bias toward pro residues.

This is an uncharacterized protein from Caenorhabditis elegans.